Reading from the N-terminus, the 258-residue chain is Phosphate import ATP-binding protein PstB (258 aa).

The 241-residue stretch at I13–I253 folds into the ABC transporter domain. G45 to S52 contacts ATP.

This sequence belongs to the ABC transporter superfamily. Phosphate importer (TC 3.A.1.7) family. The complex is composed of two ATP-binding proteins (PstB), two transmembrane proteins (PstC and PstA) and a solute-binding protein (PstS).

It is found in the cell membrane. The catalysed reaction is phosphate(out) + ATP + H2O = ADP + 2 phosphate(in) + H(+). In terms of biological role, part of the ABC transporter complex PstSACB involved in phosphate import. Responsible for energy coupling to the transport system. In Methanosarcina barkeri (strain Fusaro / DSM 804), this protein is Phosphate import ATP-binding protein PstB.